A 360-amino-acid chain; its full sequence is GTPase Obg (360 aa).

Residues 1-156 (MFVDSVEIII…KCVRLELKLI (156 aa)) form the Obg domain. The OBG-type G domain occupies 157–360 (ADIGLVGFPN…LKFVLLKALQ (204 aa)). GTP is bound by residues 163 to 170 (GFPNAGKS), 188 to 192 (FTTLV), 210 to 213 (DIPG), 279 to 282 (NKCD), and 341 to 343 (SAV). 2 residues coordinate Mg(2+): Ser-170 and Thr-190.

The protein belongs to the TRAFAC class OBG-HflX-like GTPase superfamily. OBG GTPase family. In terms of assembly, monomer. Mg(2+) is required as a cofactor.

It localises to the cytoplasm. Its function is as follows. An essential GTPase which binds GTP, GDP and possibly (p)ppGpp with moderate affinity, with high nucleotide exchange rates and a fairly low GTP hydrolysis rate. Plays a role in control of the cell cycle, stress response, ribosome biogenesis and in those bacteria that undergo differentiation, in morphogenesis control. This Helicobacter pylori (strain J99 / ATCC 700824) (Campylobacter pylori J99) protein is GTPase Obg.